The sequence spans 237 residues: Ribonuclease PH (237 aa).

Phosphate contacts are provided by residues R86 and 124-126 (GTR).

It belongs to the RNase PH family. In terms of assembly, homohexameric ring arranged as a trimer of dimers.

It catalyses the reaction tRNA(n+1) + phosphate = tRNA(n) + a ribonucleoside 5'-diphosphate. Its function is as follows. Phosphorolytic 3'-5' exoribonuclease that plays an important role in tRNA 3'-end maturation. Removes nucleotide residues following the 3'-CCA terminus of tRNAs; can also add nucleotides to the ends of RNA molecules by using nucleoside diphosphates as substrates, but this may not be physiologically important. Probably plays a role in initiation of 16S rRNA degradation (leading to ribosome degradation) during starvation. The chain is Ribonuclease PH from Zymomonas mobilis subsp. mobilis (strain ATCC 31821 / ZM4 / CP4).